We begin with the raw amino-acid sequence, 151 residues long: Small ribosomal subunit protein uS15y (151 aa).

Belongs to the universal ribosomal protein uS15 family.

The protein is Small ribosomal subunit protein uS15y of Oryza sativa subsp. japonica (Rice).